A 291-amino-acid chain; its full sequence is MKQVQLKSRAKINLSLDVLGRRSDGYHEVEMIMQQIDLYDLITLEERKDSEIRISTQCEFIPTNEDNIAYRAAEIIRENSGINRGVNIYIDKRIPVAAGLAGGSSNAAAVLEGLNHMWRLRLTPKQLMDLGVKLGADVPFCILGGAAIARGIGEILTPIEGLKNVWMVIAKPAISVSTAEVYRQLDLSKLDSRPNTDEVIQAVKEGDLYTLAGKMHNVLESVTQRNHPIIREMKRKMLEYNAIGAMMSGSGPTVFGIYKNYGRAKSAYENLSILYKQTHLVQSYSRRKWDE.

The active site involves Lys11. ATP is bound at residue 95-105 (PVAAGLAGGSS). Asp137 is an active-site residue.

This sequence belongs to the GHMP kinase family. IspE subfamily.

It carries out the reaction 4-CDP-2-C-methyl-D-erythritol + ATP = 4-CDP-2-C-methyl-D-erythritol 2-phosphate + ADP + H(+). It functions in the pathway isoprenoid biosynthesis; isopentenyl diphosphate biosynthesis via DXP pathway; isopentenyl diphosphate from 1-deoxy-D-xylulose 5-phosphate: step 3/6. Its function is as follows. Catalyzes the phosphorylation of the position 2 hydroxy group of 4-diphosphocytidyl-2C-methyl-D-erythritol. This is 4-diphosphocytidyl-2-C-methyl-D-erythritol kinase from Alkaliphilus metalliredigens (strain QYMF).